Reading from the N-terminus, the 235-residue chain is Octanoyltransferase LIP2, mitochondrial (235 aa).

The transit peptide at 1–32 (MRSPRTLEVWKLGTVNYLKSLKLQEKLVSERK) directs the protein to the mitochondrion. The region spanning 34–218 (HQIPDTLLSL…CLAKAFSYDD (185 aa)) is the BPL/LPL catalytic domain. Substrate contacts are provided by residues 79–86 (RGGDITFH), 147–149 (AIG), and 160–162 (GLA). Cysteine 178 acts as the Acyl-thioester intermediate in catalysis.

Belongs to the LipB family. In terms of tissue distribution, expressed in leaves. Expressed in roots, rosette leaves, cauline leaves, stems and siliques.

It is found in the mitochondrion. The catalysed reaction is octanoyl-[ACP] + L-lysyl-[protein] = N(6)-octanoyl-L-lysyl-[protein] + holo-[ACP] + H(+). Its pathway is protein modification; protein lipoylation via endogenous pathway; protein N(6)-(lipoyl)lysine from octanoyl-[acyl-carrier-protein]: step 1/2. Functionally, catalyzes the transfer of endogenously produced octanoic acid from octanoyl-acyl-carrier-protein onto the lipoyl domains of lipoate-dependent enzymes. Lipoyl-ACP can also act as a substrate although octanoyl-ACP is likely to be the physiological substrate. Together with LIP1 is essential for mitochondrial protein lipoylation during seed development. Required for the lipoylation of mitochondrial 2-oxoglutarate dehydrogenase component E2 proteins in leaves and roots. The protein is Octanoyltransferase LIP2, mitochondrial of Arabidopsis thaliana (Mouse-ear cress).